A 388-amino-acid chain; its full sequence is Cystathionine gamma-synthase (388 aa).

Residues 1–24 (MSEDRTGHQGISGPATRAIHAGYR) form a disordered region. Lysine 208 bears the N6-(pyridoxal phosphate)lysine mark.

Belongs to the trans-sulfuration enzymes family. As to quaternary structure, homotetramer. Requires pyridoxal 5'-phosphate as cofactor.

It localises to the cytoplasm. The enzyme catalyses O-succinyl-L-homoserine + L-cysteine = L,L-cystathionine + succinate + H(+). Functionally, catalyzes the formation of L-cystathionine from O-succinyl-L-homoserine (OSHS) and L-cysteine, via a gamma-replacement reaction. In the absence of thiol, catalyzes gamma-elimination to form 2-oxobutanoate, succinate and ammonia. In Mycobacterium bovis (strain ATCC BAA-935 / AF2122/97), this protein is Cystathionine gamma-synthase (metB).